The chain runs to 415 residues: NEDD8-specific protease 2 (415 aa).

The interval 1 to 42 (MRSNSIFTKEIDSEAVKKSSNLRPPSTGSSNSNGSDTASPKK) is disordered. Positions 26–38 (STGSSNSNGSDTA) are enriched in low complexity. Residue S35 is modified to Phosphoserine. Residues H171, D188, and C229 contribute to the active site. Positions 320–415 (AVTSDSAQPH…QHTQQSIEIH (96 aa)) are disordered. 3 stretches are compositionally biased toward polar residues: residues 335-368 (MPSS…NSSP), 379-390 (TASTSVLPTSIL), and 405-415 (IQHTQQSIEIH). At S367 the chain carries Phosphoserine.

The protein belongs to the peptidase C48 family.

The protein resides in the cytoplasm. Its subcellular location is the nucleus. Its function is as follows. Protease that catalyzes two essential functions in the NEDD8 pathway: processing of full-length NEDD8 to its mature form and deconjugation of NEDD8 from targeted proteins such as the pcu1, pcu2 and pcu4 cullins and other proteins. Has a role in meiosis. The protein is NEDD8-specific protease 2 (nep2) of Schizosaccharomyces pombe (strain 972 / ATCC 24843) (Fission yeast).